The following is a 738-amino-acid chain: uncharacterized protein (738 aa).

3 stretches are compositionally biased toward polar residues: residues 1-34, 140-169, and 177-197; these read MSSS…QVSS, TSSD…QSPP, and KPFS…STKD. 2 disordered regions span residues 1–51 and 140–197; these read MSSS…AASI and TSSD…STKD. The region spanning 363–434 is the RRM domain; that stretch reads SRLFLGHLNT…QKLHLEISKI (72 aa). The interval 466 to 487 is disordered; the sequence is YPTSSRKRTRSPLMSKGKSYDR.

This is an uncharacterized protein from Schizosaccharomyces pombe (strain 972 / ATCC 24843) (Fission yeast).